Reading from the N-terminus, the 72-residue chain is Large ribosomal subunit protein bL31c (72 aa).

This sequence belongs to the bacterial ribosomal protein bL31 family. Type A subfamily. As to quaternary structure, part of the 50S ribosomal subunit.

The protein resides in the plastid. The protein localises to the chloroplast. Functionally, binds the 23S rRNA. The polypeptide is Large ribosomal subunit protein bL31c (Trieres chinensis (Marine centric diatom)).